Reading from the N-terminus, the 1286-residue chain is Structural maintenance of chromosomes protein 4 (1286 aa).

The interval 1 to 51 (MRRKGTKPSTACHQEEGPPPSQDGAHSDEEMEQPAGEAESAAPAKPPGEEL) is disordered. 3 positions are modified to phosphoserine: S21, S27, and S40. 111-118 (GPNGSGKS) is an ATP binding site. Residue S141 is modified to Phosphoserine. The stretch at 270-589 (RRVEILNEHR…KVEEAKSSLA (320 aa)) forms a coiled coil. K379 and K677 each carry N6-acetyllysine. An SMC hinge domain is found at 611 to 725 (PGIYGRLGDL…ANNLDQATRV (115 aa)). Coiled coils occupy residues 768 to 1018 (EISV…KLEQ) and 1068 to 1133 (ESIT…LNEF). A Phosphoserine modification is found at S980.

It belongs to the SMC family. SMC4 subfamily. In terms of assembly, forms a heterodimer with SMC2. Component of the condensin complex, which contains the SMC2 and SMC4 heterodimer, and three non SMC subunits that probably regulate the complex: BRRN1/CAPH, CNAP1/CAPD2 and CAPG.

The protein resides in the nucleus. The protein localises to the cytoplasm. Its subcellular location is the chromosome. Its function is as follows. Central component of the condensin complex, a complex required for conversion of interphase chromatin into mitotic-like condense chromosomes. The condensin complex probably introduces positive supercoils into relaxed DNA in the presence of type I topoisomerases and converts nicked DNA into positive knotted forms in the presence of type II topoisomerases. This is Structural maintenance of chromosomes protein 4 (Smc4) from Mus musculus (Mouse).